Reading from the N-terminus, the 62-residue chain is QMTCRISGEVFTWCGTTCPLTCENFRNPPKHCPQGCFVGCMCRRGLVRHRNGRCVRPPRCYY.

5 disulfides stabilise this stretch: C4–C40, C14–C36, C18–C32, C22–C60, and C42–C54. Residues 4–60 (CRISGEVFTWCGTTCPLTCENFRNPPKHCPQGCFVGCMCRRGLVRHRNGRCVRPPRC) form the TIL domain.

This sequence belongs to the serine protease inhibitor-like (TIL domain-containing) family. In terms of tissue distribution, expressed by the venom gland.

It localises to the secreted. Its function is as follows. Serine protease inhibitor. This is Venom peptide SjAPI-2 from Scorpiops jendeki (Scorpion).